The primary structure comprises 454 residues: tRNA modification GTPase MnmE (454 aa).

Positions 23, 80, and 120 each coordinate (6S)-5-formyl-5,6,7,8-tetrahydrofolate. The TrmE-type G domain maps to 216-377; that stretch reads GMKVVIAGRP…LRNHLKQSMG (162 aa). Residue Asn226 coordinates K(+). Residues 226–231, 245–251, 270–273, 335–338, and 358–360 each bind GTP; these read NAGKSS, TDIAGTT, DTAG, NKAD, and SAR. Mg(2+) is bound at residue Ser230. K(+) is bound by residues Thr245, Ile247, and Thr250. Thr251 contacts Mg(2+). Lys454 lines the (6S)-5-formyl-5,6,7,8-tetrahydrofolate pocket.

It belongs to the TRAFAC class TrmE-Era-EngA-EngB-Septin-like GTPase superfamily. TrmE GTPase family. Homodimer. Heterotetramer of two MnmE and two MnmG subunits. K(+) is required as a cofactor.

Its subcellular location is the cytoplasm. Functionally, exhibits a very high intrinsic GTPase hydrolysis rate. Involved in the addition of a carboxymethylaminomethyl (cmnm) group at the wobble position (U34) of certain tRNAs, forming tRNA-cmnm(5)s(2)U34. In Escherichia coli O139:H28 (strain E24377A / ETEC), this protein is tRNA modification GTPase MnmE.